The chain runs to 122 residues: Proximal tubules-expressed gene protein (122 aa).

Residues 33-53 traverse the membrane as a helical segment; that stretch reads WLTGLIAMTVFLFLVLVVYVA.

Belongs to the PDZK1-interacting protein 1/SMIM24 family. In terms of tissue distribution, expressed in prospective pronephric mesoderm at the late gastrula stage. After neurulation, expressed in the intermediate mesoderm, eye placode and blood islands. Expression becomes restricted to the pronephric proximal tubule during embryogenesis, but is absent from the connecting tubules.

It localises to the membrane. Its function is as follows. Essential for pronephric tubule development, acting upstream of pax8 and lhx1/lim1 and downstream of retinoic acid signaling to induce pronephric mesoderm to form pronephric tubule-specific cells. The chain is Proximal tubules-expressed gene protein (pteg) from Xenopus laevis (African clawed frog).